Reading from the N-terminus, the 810-residue chain is MTTEKSLVAEAENSQHQQQKEEGEGVTNSGQQETQLEELSQEAAEGDNHCEQKLKTSNGDTPTHEDLTKNKERTSENRGLSRLFSSFLKRPKSQVSEEEGKDVESAKEKCEGGQKEIEFGTSLDEEIILKAPIAAPEPELKTDPSLDLHSLSSAETQPAQEEHREDPDFETKEGGGLEECSKIEVKEESPESKAERELKASQKSIRRHRNMHCKVSLLDDTVYECVVEKHAKGQDLLKRVCEHLNLLEEDYFGLAIWDNGASKTWLDSAKEIKKQVRGVPWNFTFNVKFYPPDPAQLTEDITRYYLCLQLRQDIVSGRLPCSFATLALLGSYTIQSELGDYDPELHGAEYVSDFKLAPNQTKELEEKVMELHKSYRSMTPAQADLEFLENAKKLSMYGVDLHKAKDLEGVDIILGVCSSGLLVYKDKLRINRFPWPKVLKISYKRSSFFIKIRPGEQEQYESTIGFKLPSYRAAKKLWKVCVEHHTFFRLTSTDTLPKSKFLALGSKFRYSGRTQAQTRQASALIDRPAPHFERTASKRASRSLDGAAAVDSDRSPRPTSAPAIAQSQDAEGTVPGAPVKKTVVSKAQKETVKDEEKKEEGPPDQAEPEPTEVWKDLDKSQEEIKKHHASISELKKNFMESVPEPRPSEWDKRLSTHSPFRTLNINGQLPTGEGPPLVKTQTVTISDTANSVKSEIPTKDVPIVHTETKTITYEAAQTDDSNGDLDPGVLLTAQTITSETTSSTTTTQITKTVKGGISETRIEKRIVITGDADIDHDQVLVQAIKEAKEQHPDMSVTKVVVHQETEISEE.

Residues 1-124 are disordered; the sequence is MTTEKSLVAE…KEIEFGTSLD (124 aa). S14 carries the phosphoserine modification. At T61 the chain carries Phosphothreonine. Residues 62–76 show a composition bias toward basic and acidic residues; the sequence is PTHEDLTKNKERTSE. Phosphoserine is present on residues S85, S86, S96, S105, S122, S150, S152, S153, S189, and S192. A compositionally biased stretch (basic and acidic residues) spans 102-118; it reads DVESAKEKCEGGQKEIE. The interval 152 to 203 is disordered; that stretch reads SSAETQPAQEEHREDPDFETKEGGGLEECSKIEVKEESPESKAERELKASQK. Residues 160–200 show a composition bias toward basic and acidic residues; the sequence is QEEHREDPDFETKEGGGLEECSKIEVKEESPESKAERELKA. The region spanning 211 to 492 is the FERM domain; the sequence is MHCKVSLLDD…EHHTFFRLTS (282 aa). At Y223 the chain carries Phosphotyrosine. Phosphothreonine is present on T379. Residues 518-613 form a disordered region; sequence TRQASALIDR…DQAEPEPTEV (96 aa). Residues S522, S541, S543, and S555 each carry the phosphoserine modification. The segment covering 587 to 601 has biased composition (basic and acidic residues); that stretch reads AQKETVKDEEKKEEG. The interval 615–659 is spectrin--actin-binding; the sequence is KDLDKSQEEIKKHHASISELKKNFMESVPEPRPSEWDKRLSTHSP. A phosphoserine mark is found at S620, S630, S655, and S658. A C-terminal (CTD) region spans residues 660 to 810; the sequence is FRTLNINGQL…VHQETEISEE (151 aa). 2 positions are modified to phosphothreonine: T682 and T805.

In terms of assembly, binds with a high affinity to glycophorin and with lower affinity to band III protein. Associates with the nuclear mitotic apparatus. Binds calmodulin, CPAP and DLG1. Also found to associate with contractile apparatus and tight junctions. Interacts with NUMA1; this interaction is negatively regulated by CDK1 during metaphase and promotes for anaphase-specific localization of NUMA1 in symmetrically dividing cells. Interacts with ATP2B1; regulates small intestinal calcium absorption through regulation of membrane expression of ATP2B1. Post-translationally, O-glycosylated; contains N-acetylglucosamine side chains in the C-terminal domain. Phosphorylated at multiple sites by different protein kinases and each phosphorylation event selectively modulates the protein's functions.

The protein localises to the nucleus. It is found in the cytoplasm. It localises to the cytoskeleton. Its subcellular location is the cell cortex. Its function is as follows. Protein 4.1 is a major structural element of the erythrocyte membrane skeleton. It plays a key role in regulating membrane physical properties of mechanical stability and deformability by stabilizing spectrin-actin interaction. Recruits DLG1 to membranes. Required for dynein-dynactin complex and NUMA1 recruitment at the mitotic cell cortex during anaphase. This chain is Protein 4.1, found in Canis lupus familiaris (Dog).